The primary structure comprises 476 residues: Ubiquinone biosynthesis monooxygenase COQ6, mitochondrial (476 aa).

Residues 1–42 (MAARIGPMAGLLCVRWWSTAQLAARGGPLVACRRWTSSSTDS) constitute a mitochondrion transit peptide.

Belongs to the UbiH/COQ6 family. As to quaternary structure, component of a multi-subunit COQ enzyme complex, composed of at least COQ3, COQ4, COQ5, COQ6, COQ7 and COQ9. Interacts with COQ8B and COQ7. The cofactor is FAD. In the kidney, expressed almost exclusively in glomerular podocytes. In the inner ear, expressed in the spiral ganglion, as well as in stria vascularis and spiral ligament cells.

It is found in the mitochondrion inner membrane. It localises to the golgi apparatus. Its subcellular location is the cell projection. The enzyme catalyses 4-hydroxy-3-(all-trans-decaprenyl)benzoate + 2 reduced [2Fe-2S]-[ferredoxin] + O2 + 2 H(+) = 3,4-dihydroxy-5-(all-trans-decaprenyl)benzoate + 2 oxidized [2Fe-2S]-[ferredoxin] + H2O. It catalyses the reaction 2-methoxy-6-(all-trans-decaprenyl)phenol + 2 reduced [2Fe-2S]-[ferredoxin] + O2 + 2 H(+) = 2-methoxy-6-(all-trans-decaprenyl)benzene-1,4-diol + 2 oxidized [2Fe-2S]-[ferredoxin] + H2O. It participates in cofactor biosynthesis; ubiquinone biosynthesis. In terms of biological role, FAD-dependent monooxygenase required for two non-consecutive steps during ubiquinone biosynthesis. Required for the C5-ring hydroxylation during ubiquinone biosynthesis by catalyzing the hydroxylation of 4-hydroxy-3-(all-trans-decaprenyl)benzoic acid to 3,4-dihydroxy-5-(all-trans-decaprenyl)benzoic acid. Also acts downstream of COQ4, for the C1-hydroxylation during ubiquinone biosynthesis by catalyzing the hydroxylation of 2-methoxy-6-(all-trans-decaprenyl)phenol to 2-methoxy-6-(all-trans-decaprenyl)benzene-1,4-diol. The electrons required for the hydroxylation reaction are funneled indirectly to COQ6 from NADPH via a ferredoxin/ferredoxin reductase system composed of FDX2 and FDXR. The polypeptide is Ubiquinone biosynthesis monooxygenase COQ6, mitochondrial (Rattus norvegicus (Rat)).